A 176-amino-acid polypeptide reads, in one-letter code: Viral interleukin-10 homolog (176 aa).

The N-terminal stretch at 1–25 (MLSVMVSSSLVLIVFFLGASEEAKP) is a signal peptide. Intrachain disulfides connect Cys-38-Cys-128 and Cys-82-Cys-133. A glycan (N-linked (GlcNAc...) asparagine; by host) is linked at Asn-152.

The protein belongs to the IL-10 family. As to quaternary structure, homodimer; disulfide-linked.

It localises to the secreted. Functional viral IL-10 homolog. Can bind to the human IL-10 receptor and compete with human IL-10 for binding sites. Requires both subunits of the human IL-10 receptor complex to induce signal transduction events and biological activities. IL-10 signaling pathway has several immunosuppressive activities that are exploited by the virus. Inhibits TLR-induced type I interferon production in host plasmacytoid dendritic cells. This is Viral interleukin-10 homolog (UL111A) from Homo sapiens (Human).